A 357-amino-acid chain; its full sequence is SNF1-related protein kinase regulatory subunit gamma-like PV42b (357 aa).

CBS domains lie at 16 to 97 (MIDK…DGES), 113 to 185 (HCPE…SSQL), 198 to 273 (AIHN…WLPL), and 293 to 351 (STPG…ALLS).

It belongs to the 5'-AMP-activated protein kinase gamma subunit family. Expressed highly in rosette leaves, cauline leaves, open flowers, developing siliques and dry seeds, but at a low level in stems and floral buds.

Functionally, plays redundant role with PV42a in regulating male gametogenesis and pollen tube guidance. This chain is SNF1-related protein kinase regulatory subunit gamma-like PV42b (PV42B), found in Arabidopsis thaliana (Mouse-ear cress).